We begin with the raw amino-acid sequence, 490 residues long: Phosphoethanolamine N-methyltransferase 3 (490 aa).

Gly60, Arg65, Asp81, Asp106, Val107, and Asn125 together coordinate S-adenosyl-L-homocysteine. Phosphocholine-binding residues include Ser158, Ser163, Gly164, Arg168, and Tyr175. Residues 244-245 (QY) and Tyr253 contribute to the N-methylethanolamine phosphate site. Phosphocholine is bound at residue Tyr253. S-adenosyl-L-homocysteine-binding residues include Val262, Ser263, Gly289, Asp311, Asp337, Cys338, and Arg354. Phosphocholine contacts are provided by Tyr385, Tyr399, Arg403, Tyr405, and Lys471. N-methylethanolamine phosphate is bound by residues Tyr385, Tyr399, 403-405 (RGY), and Lys471.

This sequence belongs to the class I-like SAM-binding methyltransferase superfamily. PEAMT family. Expressed in root vasculature, shoots, rosettes leaves, cauline leaves, sepals, petals, anther filaments and ovules. Highly expressed in leaf vasculature.

The protein resides in the cytoplasm. It carries out the reaction phosphoethanolamine + S-adenosyl-L-methionine = N-methylethanolamine phosphate + S-adenosyl-L-homocysteine + H(+). It catalyses the reaction N-methylethanolamine phosphate + S-adenosyl-L-methionine = N,N-dimethylethanolamine phosphate + S-adenosyl-L-homocysteine + H(+). The catalysed reaction is N,N-dimethylethanolamine phosphate + S-adenosyl-L-methionine = phosphocholine + S-adenosyl-L-homocysteine + H(+). It functions in the pathway phospholipid metabolism; phosphatidylcholine biosynthesis; phosphocholine from phosphoethanolamine: step 1/1. In terms of biological role, involved in phosphocholine biosynthesis. Catalyzes the N-methylation of phosphoethanolamine, phosphomonomethylethanolamine and phosphodimethylethanolamine, the three methylation steps required to convert phosphoethanolamine to phosphocholine (PC). In association with NMT1, regulates PC homeostasis, phase transition at the shoot apex, coordinated organ development, and fertility. In associtation with NMT1, involved in phosphatidylcholine biosynthesis and vascular development. In Arabidopsis thaliana (Mouse-ear cress), this protein is Phosphoethanolamine N-methyltransferase 3.